The following is a 453-amino-acid chain: UDP-N-acetylmuramate--L-alanine ligase (453 aa).

112–118 (GTHGKTT) contributes to the ATP binding site.

Belongs to the MurCDEF family.

Its subcellular location is the cytoplasm. It carries out the reaction UDP-N-acetyl-alpha-D-muramate + L-alanine + ATP = UDP-N-acetyl-alpha-D-muramoyl-L-alanine + ADP + phosphate + H(+). The protein operates within cell wall biogenesis; peptidoglycan biosynthesis. In terms of biological role, cell wall formation. The polypeptide is UDP-N-acetylmuramate--L-alanine ligase (Lawsonia intracellularis (strain PHE/MN1-00)).